We begin with the raw amino-acid sequence, 290 residues long: Glycine--tRNA ligase alpha subunit (290 aa).

It belongs to the class-II aminoacyl-tRNA synthetase family. Tetramer of two alpha and two beta subunits.

The protein resides in the cytoplasm. The enzyme catalyses tRNA(Gly) + glycine + ATP = glycyl-tRNA(Gly) + AMP + diphosphate. The chain is Glycine--tRNA ligase alpha subunit from Syntrophotalea carbinolica (strain DSM 2380 / NBRC 103641 / GraBd1) (Pelobacter carbinolicus).